Consider the following 280-residue polypeptide: Bifunctional protein FolD (280 aa).

NADP(+)-binding positions include 166 to 168 and Ser191; that span reads GRS.

Belongs to the tetrahydrofolate dehydrogenase/cyclohydrolase family. Homodimer.

The catalysed reaction is (6R)-5,10-methylene-5,6,7,8-tetrahydrofolate + NADP(+) = (6R)-5,10-methenyltetrahydrofolate + NADPH. It catalyses the reaction (6R)-5,10-methenyltetrahydrofolate + H2O = (6R)-10-formyltetrahydrofolate + H(+). It functions in the pathway one-carbon metabolism; tetrahydrofolate interconversion. Its function is as follows. Catalyzes the oxidation of 5,10-methylenetetrahydrofolate to 5,10-methenyltetrahydrofolate and then the hydrolysis of 5,10-methenyltetrahydrofolate to 10-formyltetrahydrofolate. This chain is Bifunctional protein FolD, found in Teredinibacter turnerae (strain ATCC 39867 / T7901).